Reading from the N-terminus, the 326-residue chain is Adenosine receptor A1 (326 aa).

Over 1–10 (MPPSISAFQA) the chain is Extracellular. The chain crosses the membrane as a helical span at residues 11–33 (AYIGIEVLIALVSVPGNVLVIWA). Residues 34–46 (VKVNQALRDATFC) are Cytoplasmic-facing. The helical transmembrane segment at 47 to 69 (FIVSLAVADVAVGALVIPLAILI) threads the bilayer. Topologically, residues 70–80 (NIGPQTYFHTC) are extracellular. A disulfide bridge links cysteine 80 with cysteine 169. A helical transmembrane segment spans residues 81–102 (LMVACPVLILTQSSILALLAIA). Residues 103 to 123 (VDRYLRVKIPLRYKMVVTPRR) lie on the Cytoplasmic side of the membrane. Residues 124–146 (AAVAIAGCWILSFVVGLTPMFGW) form a helical membrane-spanning segment. Topologically, residues 147 to 176 (NNLSAVERAWAANGSMGEPVIKCEFEKVIS) are extracellular. Residue asparagine 159 is glycosylated (N-linked (GlcNAc...) asparagine). The helical transmembrane segment at 177 to 201 (MEYMVYFNFFVWVLPPLLLMVLIYL) threads the bilayer. Topologically, residues 202–235 (EVFYLIRKQLNKKVSASSGDPQKYYGKELKIAKS) are cytoplasmic. The chain crosses the membrane as a helical span at residues 236–259 (LALILFLFALSWLPLHILNCITLF). At 260-267 (CPSCHKPS) the chain is on the extracellular side. A helical transmembrane segment spans residues 268-292 (ILTYIAIFLTHGNSAMNPIVYAFRI). Topologically, residues 293–326 (QKFRVTFLKIWNDHFRCQPAPPIDEDLPEERPDD) are cytoplasmic. Cysteine 309 carries S-palmitoyl cysteine lipidation.

The protein belongs to the G-protein coupled receptor 1 family.

The protein resides in the cell membrane. Its function is as follows. Receptor for adenosine. The activity of this receptor is mediated by G proteins which inhibit adenylyl cyclase. The sequence is that of Adenosine receptor A1 (ADORA1) from Homo sapiens (Human).